Here is a 519-residue protein sequence, read N- to C-terminus: Protein nucleotidyltransferase YdiU (519 aa).

The ATP site is built by Gly-100, Gly-102, Arg-103, Lys-123, Asp-135, Gly-136, Arg-193, and Arg-200. Asp-270 (proton acceptor) is an active-site residue. Residues Asn-271 and Asp-280 each contribute to the Mg(2+) site. ATP is bound at residue Asp-280.

The protein belongs to the SELO family. Mg(2+) is required as a cofactor. It depends on Mn(2+) as a cofactor.

It catalyses the reaction L-seryl-[protein] + ATP = 3-O-(5'-adenylyl)-L-seryl-[protein] + diphosphate. It carries out the reaction L-threonyl-[protein] + ATP = 3-O-(5'-adenylyl)-L-threonyl-[protein] + diphosphate. The enzyme catalyses L-tyrosyl-[protein] + ATP = O-(5'-adenylyl)-L-tyrosyl-[protein] + diphosphate. The catalysed reaction is L-histidyl-[protein] + UTP = N(tele)-(5'-uridylyl)-L-histidyl-[protein] + diphosphate. It catalyses the reaction L-seryl-[protein] + UTP = O-(5'-uridylyl)-L-seryl-[protein] + diphosphate. It carries out the reaction L-tyrosyl-[protein] + UTP = O-(5'-uridylyl)-L-tyrosyl-[protein] + diphosphate. In terms of biological role, nucleotidyltransferase involved in the post-translational modification of proteins. It can catalyze the addition of adenosine monophosphate (AMP) or uridine monophosphate (UMP) to a protein, resulting in modifications known as AMPylation and UMPylation. The chain is Protein nucleotidyltransferase YdiU from Xylella fastidiosa (strain 9a5c).